Consider the following 342-residue polypeptide: Ribosomal RNA small subunit methyltransferase H (342 aa).

S-adenosyl-L-methionine-binding positions include 36–38, aspartate 56, phenylalanine 82, aspartate 100, and glutamine 107; that span reads GGH. The tract at residues 309–342 is disordered; that stretch reads ENRESGMGKGHGAAASRFPTPDSRFPTSPNGDAP. The segment covering 333-342 has biased composition (polar residues); that stretch reads FPTSPNGDAP.

The protein belongs to the methyltransferase superfamily. RsmH family.

The protein resides in the cytoplasm. It carries out the reaction cytidine(1402) in 16S rRNA + S-adenosyl-L-methionine = N(4)-methylcytidine(1402) in 16S rRNA + S-adenosyl-L-homocysteine + H(+). In terms of biological role, specifically methylates the N4 position of cytidine in position 1402 (C1402) of 16S rRNA. The polypeptide is Ribosomal RNA small subunit methyltransferase H (Xanthomonas campestris pv. campestris (strain 8004)).